The following is a 151-amino-acid chain: Conidium-specific protein (151 aa).

The segment at 1 to 72 (MAKPHCSSRS…FSGDPDSEVE (72 aa)) is disordered. A compositionally biased stretch (basic and acidic residues) spans 48-60 (RKDNSADKGDTLR).

This is Conidium-specific protein (SpoC1-C1D) from Emericella nidulans (strain FGSC A4 / ATCC 38163 / CBS 112.46 / NRRL 194 / M139) (Aspergillus nidulans).